The chain runs to 436 residues: Xylose isomerase (436 aa).

Residues H100 and D103 contribute to the active site. Residues E231, E267, H270, D295, D306, D308, and D338 each contribute to the Mg(2+) site.

This sequence belongs to the xylose isomerase family. Homotetramer. Requires Mg(2+) as cofactor.

It localises to the cytoplasm. The enzyme catalyses alpha-D-xylose = alpha-D-xylulofuranose. This chain is Xylose isomerase, found in Rhizobium johnstonii (strain DSM 114642 / LMG 32736 / 3841) (Rhizobium leguminosarum bv. viciae).